The primary structure comprises 131 residues: MKFTTVATVFAISSLAAAKGGEKDHGKASTVTKYVTETTHRYGRFDKTSRSKKPKETGTHRYGKFNKTPRPVTTTVLVKESDLPKKRDAVVARDSKNASSNSTTSSGNNGVATGVSLGLAGVLAVGAALVI.

The first 18 residues, Met-1–Ala-18, serve as a signal peptide directing secretion. Basic and acidic residues-rich tracts occupy residues Tyr-42–Thr-59 and Lys-79–Lys-96. Residues Tyr-42–Gly-110 form a disordered region. Asn-97 and Asn-101 each carry an N-linked (GlcNAc...) asparagine glycan. The segment covering Asn-97–Gly-110 has biased composition (low complexity). Residue Ser-105 is the site of GPI-anchor amidated serine attachment. Positions Ser-106–Ile-131 are cleaved as a propeptide — removed in mature form.

This sequence belongs to the PGA14 family. In terms of processing, the GPI-anchor is attached to the protein in the endoplasmic reticulum and serves to target the protein to the cell surface. There, the glucosamine-inositol phospholipid moiety is cleaved off and the GPI-modified mannoprotein is covalently attached via its lipidless GPI glycan remnant to the 1,6-beta-glucan of the outer cell wall layer.

The protein resides in the secreted. The protein localises to the cell wall. It localises to the membrane. In terms of biological role, hydrophilin which is essential to overcome the simple stress of the desiccation-rehydration process. This Candida albicans (strain SC5314 / ATCC MYA-2876) (Yeast) protein is Hydrophilin PGA14 (PGA14).